The following is a 489-amino-acid chain: Rhamnulokinase (489 aa).

13–17 (ASSGR) lines the ATP pocket. An intrachain disulfide couples Cys-68 to Cys-222. Residues Gly-83 and 236–238 (HDT) contribute to the substrate site. Catalysis depends on Asp-237, which acts as the Proton acceptor. Thr-259 contributes to the ATP binding site. Residue Asn-296 participates in substrate binding. Gln-304 is a binding site for ATP. Cys-353 and Cys-370 form a disulfide bridge. Gly-402 contacts ATP. Cys-413 and Cys-417 are oxidised to a cystine.

Belongs to the rhamnulokinase family. Requires Mg(2+) as cofactor.

It catalyses the reaction L-rhamnulose + ATP = L-rhamnulose 1-phosphate + ADP + H(+). It functions in the pathway carbohydrate degradation; L-rhamnose degradation; glycerone phosphate from L-rhamnose: step 2/3. In terms of biological role, involved in the catabolism of L-rhamnose (6-deoxy-L-mannose). Catalyzes the transfer of the gamma-phosphate group from ATP to the 1-hydroxyl group of L-rhamnulose to yield L-rhamnulose 1-phosphate. This chain is Rhamnulokinase, found in Salmonella paratyphi A (strain AKU_12601).